The primary structure comprises 133 residues: Small ribosomal subunit protein uS8 (133 aa).

A disordered region spans residues Met1–Pro28. Residues Asn16–Lys26 are compositionally biased toward basic and acidic residues.

It belongs to the universal ribosomal protein uS8 family. Part of the 30S ribosomal subunit. Contacts proteins S5 and S12.

One of the primary rRNA binding proteins, it binds directly to 16S rRNA central domain where it helps coordinate assembly of the platform of the 30S subunit. This chain is Small ribosomal subunit protein uS8, found in Prochlorococcus marinus (strain NATL1A).